The primary structure comprises 455 residues: Bifunctional protein GlmU (455 aa).

Positions 1 to 226 (MGLSVVILAA…EFEILGVNDR (226 aa)) are pyrophosphorylase. UDP-N-acetyl-alpha-D-glucosamine-binding positions include 8 to 11 (LAAG), K22, Q73, 78 to 79 (GT), 99 to 101 (YGD), G136, E151, N166, and N224. Residue D101 coordinates Mg(2+). N224 contacts Mg(2+). The segment at 227–247 (TQLASLERVWQRNVAEKIMAK) is linker. The interval 248 to 455 (GVSIADPNRF…WQRPVKKTDK (208 aa)) is N-acetyltransferase. Positions 330 and 348 each coordinate UDP-N-acetyl-alpha-D-glucosamine. The active-site Proton acceptor is the H360. Residues Y363 and N374 each contribute to the UDP-N-acetyl-alpha-D-glucosamine site. Acetyl-CoA-binding positions include A377, 383-384 (NY), S402, A420, and R437.

This sequence in the N-terminal section; belongs to the N-acetylglucosamine-1-phosphate uridyltransferase family. In the C-terminal section; belongs to the transferase hexapeptide repeat family. Homotrimer. It depends on Mg(2+) as a cofactor.

The protein localises to the cytoplasm. The enzyme catalyses alpha-D-glucosamine 1-phosphate + acetyl-CoA = N-acetyl-alpha-D-glucosamine 1-phosphate + CoA + H(+). It catalyses the reaction N-acetyl-alpha-D-glucosamine 1-phosphate + UTP + H(+) = UDP-N-acetyl-alpha-D-glucosamine + diphosphate. It functions in the pathway nucleotide-sugar biosynthesis; UDP-N-acetyl-alpha-D-glucosamine biosynthesis; N-acetyl-alpha-D-glucosamine 1-phosphate from alpha-D-glucosamine 6-phosphate (route II): step 2/2. It participates in nucleotide-sugar biosynthesis; UDP-N-acetyl-alpha-D-glucosamine biosynthesis; UDP-N-acetyl-alpha-D-glucosamine from N-acetyl-alpha-D-glucosamine 1-phosphate: step 1/1. Its pathway is bacterial outer membrane biogenesis; LPS lipid A biosynthesis. In terms of biological role, catalyzes the last two sequential reactions in the de novo biosynthetic pathway for UDP-N-acetylglucosamine (UDP-GlcNAc). The C-terminal domain catalyzes the transfer of acetyl group from acetyl coenzyme A to glucosamine-1-phosphate (GlcN-1-P) to produce N-acetylglucosamine-1-phosphate (GlcNAc-1-P), which is converted into UDP-GlcNAc by the transfer of uridine 5-monophosphate (from uridine 5-triphosphate), a reaction catalyzed by the N-terminal domain. The chain is Bifunctional protein GlmU from Francisella tularensis subsp. novicida (strain U112).